The chain runs to 77 residues: Acyl carrier protein (77 aa).

Residues 2-77 (SNIEERVRNI…SAIDYVVNNG (76 aa)) form the Carrier domain. The residue at position 37 (serine 37) is an O-(pantetheine 4'-phosphoryl)serine.

Belongs to the acyl carrier protein (ACP) family. 4'-phosphopantetheine is transferred from CoA to a specific serine of apo-ACP by AcpS. This modification is essential for activity because fatty acids are bound in thioester linkage to the sulfhydryl of the prosthetic group.

It is found in the cytoplasm. It functions in the pathway lipid metabolism; fatty acid biosynthesis. In terms of biological role, carrier of the growing fatty acid chain in fatty acid biosynthesis. This is Acyl carrier protein from Psychromonas ingrahamii (strain DSM 17664 / CCUG 51855 / 37).